The primary structure comprises 328 residues: MARSGGNDGHEEELDPELFEEPSNLEGYEDGEFEEDEEEFEEEEEELEEEEDEEEEEEENVTTDEQSGSPKSSQPVKLQSSDVLDCPTCCEPLKRPIYQCSNGHLACSSCCQKLNKKCSFCRCNIGDIRCRAMEKVIEASIVPCPNAKHGCKETTTYCNQSSHEKVCKFVRCSCPVSNCNYVSSYSNLKSHACSTAHVWGEDDIHFQLVIDRPRIFNMNLGRKKTVVFKEEKEGDLIVVQAFKGLEGVYVTVNRIAHMAPGIRDLSCSLAKLNEYSTLRSGSLVKKIQKVREKMHLEDDLMWIPPKMLSGDHWKMQICIAYGYKFIHI.

Residues 1 to 77 (MARSGGNDGH…GSPKSSQPVK (77 aa)) are disordered. Composition is skewed to acidic residues over residues 10 to 20 (HEEELDPELFE) and 27 to 62 (GYEDGEFEEDEEEFEEEEEELEEEEDEEEEEEENVT). Residues 63 to 77 (TDEQSGSPKSSQPVK) show a composition bias toward polar residues. The RING-type; degenerate zinc finger occupies 86–122 (CPTCCEPLKRPIYQCSNGHLACSSCCQKLNKKCSFCR). Positions 136 to 324 (VIEASIVPCP…MQICIAYGYK (189 aa)) are SBD. The SIAH-type; degenerate zinc finger occupies 139 to 197 (ASIVPCPNAKHGCKETTTYCNQSSHEKVCKFVRCSCPVSNCNYVSSYSNLKSHACSTAH). Residues Cys-144, Cys-151, His-163, Cys-167, Cys-174, Cys-179, His-191, and His-197 each coordinate Zn(2+).

This sequence belongs to the SINA (Seven in absentia) family.

The catalysed reaction is S-ubiquitinyl-[E2 ubiquitin-conjugating enzyme]-L-cysteine + [acceptor protein]-L-lysine = [E2 ubiquitin-conjugating enzyme]-L-cysteine + N(6)-ubiquitinyl-[acceptor protein]-L-lysine.. Its pathway is protein modification; protein ubiquitination. Its function is as follows. E3 ubiquitin-protein ligase that mediates ubiquitination and subsequent proteasomal degradation of target proteins. E3 ubiquitin ligases accept ubiquitin from an E2 ubiquitin-conjugating enzyme in the form of a thioester and then directly transfers the ubiquitin to targeted substrates. It probably triggers the ubiquitin-mediated degradation of different substrates. The sequence is that of E3 ubiquitin-protein ligase SINA-like 5 from Arabidopsis thaliana (Mouse-ear cress).